A 250-amino-acid chain; its full sequence is 1-(5-phosphoribosyl)-5-[(5-phosphoribosylamino)methylideneamino] imidazole-4-carboxamide isomerase (250 aa).

D12 (proton acceptor) is an active-site residue. Catalysis depends on D134, which acts as the Proton donor.

The protein belongs to the HisA/HisF family.

The protein localises to the cytoplasm. The enzyme catalyses 1-(5-phospho-beta-D-ribosyl)-5-[(5-phospho-beta-D-ribosylamino)methylideneamino]imidazole-4-carboxamide = 5-[(5-phospho-1-deoxy-D-ribulos-1-ylimino)methylamino]-1-(5-phospho-beta-D-ribosyl)imidazole-4-carboxamide. The protein operates within amino-acid biosynthesis; L-histidine biosynthesis; L-histidine from 5-phospho-alpha-D-ribose 1-diphosphate: step 4/9. This chain is 1-(5-phosphoribosyl)-5-[(5-phosphoribosylamino)methylideneamino] imidazole-4-carboxamide isomerase, found in Actinobacillus pleuropneumoniae serotype 5b (strain L20).